The chain runs to 1431 residues: DNA polymerase II large subunit (1431 aa).

Residues 1388-1431 (LLENFANGYNKGKKEEMPKKQRKKEQEKSKKRKVISLDDFFSRK) are disordered. The span at 1399–1415 (GKKEEMPKKQRKKEQEK) shows a compositional bias: basic and acidic residues.

Belongs to the archaeal DNA polymerase II family. In terms of assembly, heterodimer of a large subunit and a small subunit. This protein undergoes a protein self splicing that involves a post-translational excision of the intervening region (intein) followed by peptide ligation.

It carries out the reaction DNA(n) + a 2'-deoxyribonucleoside 5'-triphosphate = DNA(n+1) + diphosphate. It catalyses the reaction Exonucleolytic cleavage in the 3'- to 5'-direction to yield nucleoside 5'-phosphates.. In terms of biological role, possesses two activities: a DNA synthesis (polymerase) and an exonucleolytic activity that degrades single-stranded DNA in the 3'- to 5'-direction. Has a template-primer preference which is characteristic of a replicative DNA polymerase. This Pyrococcus horikoshii (strain ATCC 700860 / DSM 12428 / JCM 9974 / NBRC 100139 / OT-3) protein is DNA polymerase II large subunit (polC).